The sequence spans 259 residues: uncharacterized protein (259 aa).

The next 3 membrane-spanning stretches (helical) occupy residues 55 to 75 (ILIL…SYLI), 85 to 105 (FPSI…FFSS), and 127 to 147 (FFFA…LCCG).

The protein localises to the membrane. This is an uncharacterized protein from Arabidopsis thaliana (Mouse-ear cress).